A 319-amino-acid chain; its full sequence is Ribonucleoside-diphosphate reductase small chain (319 aa).

The tract at residues 313 to 319 (FSLDVDF) is interaction with R1.

This sequence belongs to the ribonucleoside diphosphate reductase small chain family. Interacts with RNR1/OPG080 subunit. Can interact with host RNR1 supunit. Fe cation is required as a cofactor.

It catalyses the reaction a 2'-deoxyribonucleoside 5'-diphosphate + [thioredoxin]-disulfide + H2O = a ribonucleoside 5'-diphosphate + [thioredoxin]-dithiol. Its function is as follows. Ribonucleoside-diphosphate reductase holoenzyme provides the precursors necessary for viral DNA synthesis. Allows virus growth in non-dividing cells. Catalyzes the biosynthesis of deoxyribonucleotides from the corresponding ribonucleotides. The polypeptide is Ribonucleoside-diphosphate reductase small chain (OPG048) (Cynomys gunnisoni (Gunnison's prairie dog)).